A 236-amino-acid polypeptide reads, in one-letter code: Probable methylthioribulose-1-phosphate dehydratase (236 aa).

The interval 1–29 is disordered; the sequence is MQNVQQPKKRKLSDEIIAEDEDYQRDPEH. Cys103 is a binding site for substrate. The Zn(2+) site is built by His121, His123, and His201.

It belongs to the aldolase class II family. MtnB subfamily. Zn(2+) serves as cofactor.

It is found in the cytoplasm. The catalysed reaction is 5-(methylsulfanyl)-D-ribulose 1-phosphate = 5-methylsulfanyl-2,3-dioxopentyl phosphate + H2O. The protein operates within amino-acid biosynthesis; L-methionine biosynthesis via salvage pathway; L-methionine from S-methyl-5-thio-alpha-D-ribose 1-phosphate: step 2/6. Catalyzes the dehydration of methylthioribulose-1-phosphate (MTRu-1-P) into 2,3-diketo-5-methylthiopentyl-1-phosphate (DK-MTP-1-P). The chain is Probable methylthioribulose-1-phosphate dehydratase from Trichoplax adhaerens (Trichoplax reptans).